The chain runs to 100 residues: Small ribosomal subunit protein uS14c (100 aa).

This sequence belongs to the universal ribosomal protein uS14 family. In terms of assembly, part of the 30S ribosomal subunit.

It is found in the plastid. The protein resides in the chloroplast. Its function is as follows. Binds 16S rRNA, required for the assembly of 30S particles. The polypeptide is Small ribosomal subunit protein uS14c (Helianthus annuus (Common sunflower)).